Reading from the N-terminus, the 210-residue chain is Large ribosomal subunit protein mL57 (210 aa).

Residues 1-59 constitute a mitochondrion transit peptide; that stretch reads MLTRHCNRLGLQIENKFVFRSSSWNCVRRIGKIACNENKYRYEMTSTEEDIDSFFSRVF.

The protein belongs to the ribonuclease III family. Mitochondrion-specific ribosomal protein mL57 subfamily. In terms of assembly, component of the mitochondrial large ribosomal subunit (mt-LSU). Mature yeast 74S mitochondrial ribosomes consist of a small (37S) and a large (54S) subunit. The 37S small subunit contains a 15S ribosomal RNA (15S mt-rRNA) and at least 32 different proteins. The 54S large subunit contains a 21S rRNA (21S mt-rRNA) and at least 45 different proteins. mL57 forms a heterodimer with mL44 and stabilizes rRNA expansion segments 1/2 at a membrane-facing protuberance close to the point of attachment of the ribosome to the translocon in the membrane.

The protein localises to the mitochondrion. In terms of biological role, component of the mitochondrial ribosome (mitoribosome), a dedicated translation machinery responsible for the synthesis of mitochondrial genome-encoded proteins, including at least some of the essential transmembrane subunits of the mitochondrial respiratory chain. The mitoribosomes are attached to the mitochondrial inner membrane and translation products are cotranslationally integrated into the membrane. In Schizosaccharomyces pombe (strain 972 / ATCC 24843) (Fission yeast), this protein is Large ribosomal subunit protein mL57 (mrp15).